Consider the following 258-residue polypeptide: MSSSLLLSGSTVSSSFIAPSKPSLVRNSSKTSLLPFRNVSRSFKTVKCTVDSSYGGNVPTFPRTRVWDPYKRLGVSPYASEEEIWASRNFLLQQYAGHERSEESIEGAFEKLLMSSFIRRKKTKINLKSKLKKKVEESPPWLKALLDFVEMPPMDTIFRRLFLFAFMGGWSIMNSAEGGPAFQVAVSLAACVYFLNEKTKSLGRACLIGIGALVAGWFCGSLIIPMIPTFLIQPTWTLELLTSLVAYVFLFLSCTFLK.

The N-terminal 48 residues, 1-48, are a transit peptide targeting the chloroplast; the sequence is MSSSLLLSGSTVSSSFIAPSKPSLVRNSSKTSLLPFRNVSRSFKTVKC. Residue Thr49 is modified to N-acetylthreonine. The segment at 67–122 is J-like domain required for holdase chaperone activity; it reads WDPYKRLGVSPYASEEEIWASRNFLLQQYAGHERSEESIEGAFEKLLMSSFIRRKK. The next 3 membrane-spanning stretches (helical) occupy residues 162-182, 207-227, and 237-257; these read FLFAFMGGWSIMNSAEGGPAF, LIGIGALVAGWFCGSLIIPMI, and TLELLTSLVAYVFLFLSCTFL.

The protein belongs to the chaperone-like protein of POR1 protein family. As to quaternary structure, interacts with PORB in chloroplast. Interacts with PORA during plastid import. Expressed ubiquitously with higher levels in young leaves, flowers, and the root elongation zone.

The protein resides in the mitochondrion membrane. It localises to the plastid. Its subcellular location is the chloroplast envelope. It is found in the chloroplast thylakoid membrane. In terms of biological role, essential protein required during embryogenesis. Exhibits holdase chaperone activity involved in the stabilization of NADPH:protochlorophyllide oxidoreductase (POR) proteins against photooxidative stress during POR proteins import into chloroplasts. Required for chloroplast biogenesis and development. When expressed in yeast, triggers mitochondria-mediated cell death associated with the loss of mitochondrial membrane potential. The polypeptide is Protein CHAPERONE-LIKE PROTEIN OF POR1, chloroplastic (Arabidopsis thaliana (Mouse-ear cress)).